The following is a 207-amino-acid chain: Killer cell lectin-like receptor subfamily F member 2 (207 aa).

The Cytoplasmic segment spans residues 1–30; that stretch reads MENEDGYMTLSFKNRCKSKQKSKDFSLYPQ. Y7 carries the post-translational modification Phosphotyrosine. A helical; Signal-anchor for type II membrane protein transmembrane segment spans residues 31–51; it reads YYCLLLIFGCIVILIFIMTGI. Residues 52–207 are Extracellular-facing; sequence DLKFWHKKMD…ILTHNGTSGV (156 aa). N67 is a glycosylation site (N-linked (GlcNAc...) asparagine). Disulfide bonds link C78–C89, C106–C193, and C172–C185. The C-type lectin domain occupies 85 to 194; it reads NEGKCYWFST…CSSTFKGICQ (110 aa). N-linked (GlcNAc...) asparagine glycosylation is present at N202.

As to quaternary structure, homodimer; non-disulfide-linked. Interacts with CLEC2A. Post-translationally, N-glycosylated.

The protein resides in the cell membrane. C-type lectin-like receptor involved in natural killer cell mediated cytotoxicity and cytokine secretion in keratinocytes via its interaction with CLEC2A. Triggers degranulation in a SYK-dependent manner and stimulates SYK phosphotyrosinylation without recruiting SYK directly. In Homo sapiens (Human), this protein is Killer cell lectin-like receptor subfamily F member 2 (KLRF2).